The following is a 319-amino-acid chain: Acetyl-coenzyme A carboxylase carboxyl transferase subunit alpha (319 aa).

Residues 35–296 (NLDEEVQRLR…KAQLLADLLD (262 aa)) form the CoA carboxyltransferase C-terminal domain.

It belongs to the AccA family. In terms of assembly, acetyl-CoA carboxylase is a heterohexamer composed of biotin carboxyl carrier protein (AccB), biotin carboxylase (AccC) and two subunits each of ACCase subunit alpha (AccA) and ACCase subunit beta (AccD).

It localises to the cytoplasm. The enzyme catalyses N(6)-carboxybiotinyl-L-lysyl-[protein] + acetyl-CoA = N(6)-biotinyl-L-lysyl-[protein] + malonyl-CoA. It participates in lipid metabolism; malonyl-CoA biosynthesis; malonyl-CoA from acetyl-CoA: step 1/1. In terms of biological role, component of the acetyl coenzyme A carboxylase (ACC) complex. First, biotin carboxylase catalyzes the carboxylation of biotin on its carrier protein (BCCP) and then the CO(2) group is transferred by the carboxyltransferase to acetyl-CoA to form malonyl-CoA. The polypeptide is Acetyl-coenzyme A carboxylase carboxyl transferase subunit alpha (Pectobacterium atrosepticum (strain SCRI 1043 / ATCC BAA-672) (Erwinia carotovora subsp. atroseptica)).